The following is a 305-amino-acid chain: Phosphoribosylaminoimidazole-succinocarboxamide synthase (305 aa).

It belongs to the SAICAR synthetase family.

It catalyses the reaction 5-amino-1-(5-phospho-D-ribosyl)imidazole-4-carboxylate + L-aspartate + ATP = (2S)-2-[5-amino-1-(5-phospho-beta-D-ribosyl)imidazole-4-carboxamido]succinate + ADP + phosphate + 2 H(+). It participates in purine metabolism; IMP biosynthesis via de novo pathway; 5-amino-1-(5-phospho-D-ribosyl)imidazole-4-carboxamide from 5-amino-1-(5-phospho-D-ribosyl)imidazole-4-carboxylate: step 1/2. In Polaromonas naphthalenivorans (strain CJ2), this protein is Phosphoribosylaminoimidazole-succinocarboxamide synthase.